The chain runs to 276 residues: Alpha N-terminal protein methyltransferase 1 (276 aa).

S-adenosyl-L-methionine-binding positions include Gly96, Arg101, 118–120 (EPV), 149–150 (LQ), and Gln165.

It belongs to the methyltransferase superfamily. NTM1 family.

It catalyses the reaction N-terminal L-alanyl-L-prolyl-L-lysyl-[protein] + 3 S-adenosyl-L-methionine = N-terminal N,N,N-trimethyl-L-alanyl-L-prolyl-L-lysyl-[protein] + 3 S-adenosyl-L-homocysteine + 3 H(+). It carries out the reaction N-terminal L-seryl-L-prolyl-L-lysyl-[protein] + 3 S-adenosyl-L-methionine = N-terminal N,N,N-trimethyl-L-seryl-L-prolyl-L-lysyl-[protein] + 3 S-adenosyl-L-homocysteine + 3 H(+). The enzyme catalyses N-terminal L-prolyl-L-prolyl-L-lysyl-[protein] + 2 S-adenosyl-L-methionine = N-terminal N,N-dimethyl-L-prolyl-L-prolyl-L-lysyl-[protein] + 2 S-adenosyl-L-homocysteine + 2 H(+). In terms of biological role, alpha-N-methyltransferase that methylates the N-terminus of target proteins containing the N-terminal motif [Ala/Pro/Ser]-Pro-Lys when the initiator Met is cleaved. Specifically catalyzes mono-, di- or tri-methylation of exposed alpha-amino group of Ala or Ser residue in the [Ala/Ser]-Pro-Lys motif and mono- or di-methylation of Pro in the Pro-Pro-Lys motif. The polypeptide is Alpha N-terminal protein methyltransferase 1 (Arabidopsis thaliana (Mouse-ear cress)).